Consider the following 80-residue polypeptide: Cytochrome c oxidase subunit 7B, mitochondrial (80 aa).

A mitochondrion-targeting transit peptide spans 1-24 (MLPLAKNALSRLQVRSIQQVVARQ). Residues 25–39 (SHQKRAPSFHDKYGN) are Mitochondrial matrix-facing. A helical transmembrane segment spans residues 40 to 60 (AILAGGAIFCVSTWTYTATQI). At 61–80 (GIEWNMSPVGRVTPKEWRDQ) the chain is on the mitochondrial intermembrane side.

Belongs to the cytochrome c oxidase VIIb family. Component of the cytochrome c oxidase (complex IV, CIV), a multisubunit enzyme composed of 14 subunits. The complex is composed of a catalytic core of 3 subunits MT-CO1, MT-CO2 and MT-CO3, encoded in the mitochondrial DNA, and 11 supernumerary subunits COX4I, COX5A, COX5B, COX6A, COX6B, COX6C, COX7A, COX7B, COX7C, COX8 and NDUFA4, which are encoded in the nuclear genome. The complex exists as a monomer or a dimer and forms supercomplexes (SCs) in the inner mitochondrial membrane with NADH-ubiquinone oxidoreductase (complex I, CI) and ubiquinol-cytochrome c oxidoreductase (cytochrome b-c1 complex, complex III, CIII), resulting in different assemblies (supercomplex SCI(1)III(2)IV(1) and megacomplex MCI(2)III(2)IV(2)).

The protein localises to the mitochondrion inner membrane. The protein operates within energy metabolism; oxidative phosphorylation. Its function is as follows. Component of the cytochrome c oxidase, the last enzyme in the mitochondrial electron transport chain which drives oxidative phosphorylation. The respiratory chain contains 3 multisubunit complexes succinate dehydrogenase (complex II, CII), ubiquinol-cytochrome c oxidoreductase (cytochrome b-c1 complex, complex III, CIII) and cytochrome c oxidase (complex IV, CIV), that cooperate to transfer electrons derived from NADH and succinate to molecular oxygen, creating an electrochemical gradient over the inner membrane that drives transmembrane transport and the ATP synthase. Cytochrome c oxidase is the component of the respiratory chain that catalyzes the reduction of oxygen to water. Electrons originating from reduced cytochrome c in the intermembrane space (IMS) are transferred via the dinuclear copper A center (CU(A)) of subunit 2 and heme A of subunit 1 to the active site in subunit 1, a binuclear center (BNC) formed by heme A3 and copper B (CU(B)). The BNC reduces molecular oxygen to 2 water molecules using 4 electrons from cytochrome c in the IMS and 4 protons from the mitochondrial matrix. Plays a role in proper central nervous system (CNS) development in vertebrates. The chain is Cytochrome c oxidase subunit 7B, mitochondrial (Cox7b) from Mus musculus (Mouse).